A 419-amino-acid chain; its full sequence is Carboxypeptidase A1 (419 aa).

Positions 1–16 (MKRLLILSLLLEAVCG) are cleaved as a signal peptide. Positions 17–110 (NENFVGHQVL…KQQMSAFQAR (94 aa)) are cleaved as a propeptide — activation peptide. The region spanning 121-414 (TYHTLDEIYE…LALLTIMDHT (294 aa)) is the Peptidase M14 domain. Zn(2+)-binding residues include H179 and E182. Substrate is bound by residues 179–182 (HSRE), R237, and 254–255 (NR). Cysteines 248 and 271 form a disulfide. A Zn(2+)-binding site is contributed by H306. Residues 307–308 (SY) and Y358 each bind substrate. The active-site Proton donor/acceptor is the E380.

This sequence belongs to the peptidase M14 family. As to quaternary structure, monomer. May form a complex with proelastase 2. The cofactor is Zn(2+).

Its subcellular location is the secreted. It carries out the reaction Release of a C-terminal amino acid, but little or no action with -Asp, -Glu, -Arg, -Lys or -Pro.. The enzyme catalyses leukotriene C4 + H2O = leukotriene F4 + glycine. Functionally, carboxypeptidase that catalyzes the release of a C-terminal amino acid, but has little or no action with -Asp, -Glu, -Arg, -Lys or -Pro. Catalyzes the conversion of leukotriene C4 to leukotriene F4 via the hydrolysis of an amide bond. The polypeptide is Carboxypeptidase A1 (Rattus norvegicus (Rat)).